The following is a 212-amino-acid chain: Regulatory protein RecX (212 aa).

The protein belongs to the RecX family.

The protein localises to the cytoplasm. Modulates RecA activity. The polypeptide is Regulatory protein RecX (Clostridium botulinum (strain Eklund 17B / Type B)).